We begin with the raw amino-acid sequence, 407 residues long: Glucan 1,3-beta-glucosidase 1 (407 aa).

Residues 1–22 (MLSFTSVFSFFLHALLLKTAFS) form the signal peptide. Residue glutamate 213 is the Proton donor of the active site. Cysteine 295 and cysteine 406 form a disulfide bridge. The Nucleophile role is filled by glutamate 312.

It belongs to the glycosyl hydrolase 5 (cellulase A) family.

The protein resides in the secreted. The catalysed reaction is Successive hydrolysis of beta-D-glucose units from the non-reducing ends of (1-&gt;3)-beta-D-glucans, releasing alpha-glucose.. Functionally, beta-glucanases participate in the metabolism of beta-glucan, the main structural component of the cell wall. It could also function biosynthetically as a transglycosylase. The polypeptide is Glucan 1,3-beta-glucosidase 1 (exg1) (Schizosaccharomyces pombe (strain 972 / ATCC 24843) (Fission yeast)).